A 604-amino-acid polypeptide reads, in one-letter code: Glutamine--fructose-6-phosphate aminotransferase [isomerizing] (604 aa).

C2 (nucleophile; for GATase activity) is an active-site residue. One can recognise a Glutamine amidotransferase type-2 domain in the interval C2–E216. SIS domains follow at residues L281–A420 and V453–P594. Residue K599 is the For Fru-6P isomerization activity of the active site.

In terms of assembly, homodimer.

It localises to the cytoplasm. The catalysed reaction is D-fructose 6-phosphate + L-glutamine = D-glucosamine 6-phosphate + L-glutamate. Its function is as follows. Catalyzes the first step in hexosamine metabolism, converting fructose-6P into glucosamine-6P using glutamine as a nitrogen source. This Thermus thermophilus (strain ATCC 27634 / DSM 579 / HB8) protein is Glutamine--fructose-6-phosphate aminotransferase [isomerizing].